The primary structure comprises 251 residues: Hydroxyacylglutathione hydrolase (251 aa).

Positions 53, 55, 57, 58, 110, 127, and 165 each coordinate Zn(2+).

It belongs to the metallo-beta-lactamase superfamily. Glyoxalase II family. In terms of assembly, monomer. Requires Zn(2+) as cofactor.

It carries out the reaction an S-(2-hydroxyacyl)glutathione + H2O = a 2-hydroxy carboxylate + glutathione + H(+). The protein operates within secondary metabolite metabolism; methylglyoxal degradation; (R)-lactate from methylglyoxal: step 2/2. In terms of biological role, thiolesterase that catalyzes the hydrolysis of S-D-lactoyl-glutathione to form glutathione and D-lactic acid. This is Hydroxyacylglutathione hydrolase from Yersinia pseudotuberculosis serotype IB (strain PB1/+).